We begin with the raw amino-acid sequence, 215 residues long: Cytochrome b6 (215 aa).

The chain crosses the membrane as a helical span at residues 32-52; that stretch reads IFYCLGGITLTCFLVQVATGF. Residue C35 coordinates heme c. The heme b site is built by H86 and H100. The next 3 helical transmembrane spans lie at 90 to 110, 116 to 136, and 186 to 206; these read ASMMVLMMILHVFRVYLTGGF, LTWVTGVVLGVLTASFGVTGY, and LHTFVLPLLTAVFMLMHFSMI. Residues H187 and H202 each contribute to the heme b site.

This sequence belongs to the cytochrome b family. PetB subfamily. The 4 large subunits of the cytochrome b6-f complex are cytochrome b6, subunit IV (17 kDa polypeptide, PetD), cytochrome f and the Rieske protein, while the 4 small subunits are PetG, PetL, PetM and PetN. The complex functions as a dimer. Heme b is required as a cofactor. The cofactor is heme c.

Its subcellular location is the plastid. The protein resides in the chloroplast thylakoid membrane. Its function is as follows. Component of the cytochrome b6-f complex, which mediates electron transfer between photosystem II (PSII) and photosystem I (PSI), cyclic electron flow around PSI, and state transitions. This is Cytochrome b6 from Lotus japonicus (Lotus corniculatus var. japonicus).